A 410-amino-acid polypeptide reads, in one-letter code: Regulator of microtubule dynamics protein 2 (410 aa).

The chain crosses the membrane as a helical span at residues 10-27 (IFGIMVGTAGISLLLLWY). At serine 51 the chain carries Phosphoserine. Positions 68–110 (FQERQLQILEKLNELLTNMEELKEEIRFLKETVPKLEEYIQDE) form a coiled coil. The residue at position 121 (serine 121) is a Phosphoserine. Residues 122–131 (PQHRARKRRL) show a composition bias toward basic residues. The interval 122–151 (PQHRARKRRLPTIQSSATSNSSEEAESEGG) is disordered. Threonine 139 is subject to Phosphothreonine. The residue at position 152 (tyrosine 152) is a Phosphotyrosine. Threonine 154 and threonine 157 each carry phosphothreonine.

This sequence belongs to the RMDN family. As to quaternary structure, interacts with microtubules.

Its subcellular location is the membrane. The protein resides in the cytoplasm. It is found in the cytoskeleton. The protein localises to the spindle. It localises to the spindle pole. The protein is Regulator of microtubule dynamics protein 2 (RMDN2) of Macaca fascicularis (Crab-eating macaque).